We begin with the raw amino-acid sequence, 114 residues long: Non-specific lipid-transfer protein 1 (114 aa).

The N-terminal stretch at 1-23 (MEIAGKIACFVVLCMVVAAPCAE) is a signal peptide. 4 cysteine pairs are disulfide-bonded: C27/C73, C37/C50, C51/C96, and C71/C110.

The protein belongs to the plant LTP family. High expression in leaf epidermis and shoot apex, and also in root epidermis during seedling germination.

Functionally, plant non-specific lipid-transfer proteins transfer phospholipids as well as galactolipids across membranes. Binds cis-unsaturated fatty acids and jasmonic acid with a higher affinity than linear chain fatty acids. Formation of the complex with jasmonic acid results in a conformational change facilitating the LPT1 binding on the elicitin plasma membrane receptor that is known to be involved in plant defense induction. May also play a role in wax or cutin deposition in the cell walls of expanding epidermal cells and certain secretory tissues. In Nicotiana tabacum (Common tobacco), this protein is Non-specific lipid-transfer protein 1 (LTP1).